Consider the following 273-residue polypeptide: NAD-dependent protein deacylase (273 aa).

Residues 20 to 272 enclose the Deacetylase sirtuin-type domain; that stretch reads RERLRQRIFF…PEFVDKFLKG (253 aa). 48–67 lines the NAD(+) pocket; sequence GAGISAESGIRTFRAADGLW. Substrate is bound by residues Tyr-92 and Arg-95. 129–132 is an NAD(+) binding site; that stretch reads QNID. Residue His-147 is the Proton acceptor of the active site. The Zn(2+) site is built by Cys-155 and Cys-174. NAD(+) contacts are provided by residues 214–216, 240–242, and Ala-258; these read GTS and NLE.

It belongs to the sirtuin family. Class III subfamily. Zn(2+) is required as a cofactor.

The protein localises to the cytoplasm. The catalysed reaction is N(6)-acetyl-L-lysyl-[protein] + NAD(+) + H2O = 2''-O-acetyl-ADP-D-ribose + nicotinamide + L-lysyl-[protein]. It carries out the reaction N(6)-succinyl-L-lysyl-[protein] + NAD(+) + H2O = 2''-O-succinyl-ADP-D-ribose + nicotinamide + L-lysyl-[protein]. It catalyses the reaction N(6)-(2-hydroxyisobutanoyl)-L-lysyl-[protein] + NAD(+) + H2O = 2''-O-(2-hydroxyisobutanoyl)-ADP-D-ribose + nicotinamide + L-lysyl-[protein]. Functionally, NAD-dependent lysine deacetylase that specifically removes acetyl groups on target proteins. Also acts as a protein-lysine deacylase by mediating protein desuccinylation and de-2-hydroxyisobutyrylation. Modulates the activities of several proteins which are inactive in their acylated form. This Salmonella typhi protein is NAD-dependent protein deacylase.